Here is a 249-residue protein sequence, read N- to C-terminus: tRNA (guanine-N(1)-)-methyltransferase (249 aa).

Residues Gly-113 and 133–138 (IGDFVL) contribute to the S-adenosyl-L-methionine site.

The protein belongs to the RNA methyltransferase TrmD family. In terms of assembly, homodimer.

It localises to the cytoplasm. The catalysed reaction is guanosine(37) in tRNA + S-adenosyl-L-methionine = N(1)-methylguanosine(37) in tRNA + S-adenosyl-L-homocysteine + H(+). Specifically methylates guanosine-37 in various tRNAs. In Photobacterium profundum (strain SS9), this protein is tRNA (guanine-N(1)-)-methyltransferase.